We begin with the raw amino-acid sequence, 142 residues long: Large ribosomal subunit protein uL22c (142 aa).

The protein belongs to the universal ribosomal protein uL22 family. As to quaternary structure, part of the 50S ribosomal subunit.

Its subcellular location is the plastid. The protein localises to the chloroplast. This protein binds specifically to 23S rRNA. Its function is as follows. The globular domain of the protein is located near the polypeptide exit tunnel on the outside of the subunit, while an extended beta-hairpin is found that lines the wall of the exit tunnel in the center of the 70S ribosome. The chain is Large ribosomal subunit protein uL22c (rpl22) from Carica papaya (Papaya).